Here is a 798-residue protein sequence, read N- to C-terminus: MAWDMCNQDSESVWSDIECAALVGEDQPLCPDLPELDLSELDVNDLDTDSFLGGLKWCSDQSEIISNQYNNEPSNIFEKIDEENEANLLAVLTETLDSLPVDEDGLPSFDALTDGDVTTDNEASPSSMPDGTPPPQEAEEPSLLKKLLLAPANTQLSYNECSGLSTQNHANHNHRIRTNPAIVKTENSWSNKAKSICQQQKPQRRPCSELLKYLTTNDDPPHTKPTENRNSSRDKCTSKKKSHTQSQSQHLQAKPTTLSLPLTPESPNDPKGSPFENKTIERTLSVELSGTAGLTPPTTPPHKANQDNPFRASPKLKSSCKTVVPPPSKKPRYSESSGTQGNNSTKKGPEQSELYAQLSKSSVLTGGHEERKTKRPSLRLFGDHDYCQSINSKTEILINISQELQDSRQLENKDVSSDWQGQICSSTDSDQCYLRETLEASKQVSPCSTRKQLQDQEIRAELNKHFGHPSQAVFDDEADKTGELRDSDFSNEQFSKLPMFINSGLAMDGLFDDSEDESDKLSYPWDGTQSYSLFNVSPSCSSFNSPCRDSVSPPKSLFSQRPQRMRSRSRSFSRHRSCSRSPYSRSRSRSPGSRSSSRSCYYYESSHYRHRTHRNSPLYVRSRSRSPYSRRPRYDSYEEYQHERLKREEYRREYEKRESERAKQRERQRQKAIEERRVIYVGKIRPDTTRTELRDRFEVFGEIEECTVNLRDDGDSYGFITYRYTCDAFAALENGYTLRRSNETDFELYFCGRKQFFKSNYADLDSNSDDFDPASTKSKYDSLDFDSLLKEAQRSLRR.

K79 is subject to N6-acetyllysine. The tract at residues 100–140 (PVDEDGLPSFDALTDGDVTTDNEASPSSMPDGTPPPQEAEE) is disordered. Polar residues predominate over residues 116–129 (DVTTDNEASPSSMP). The LXXLL motif motif lies at 144 to 148 (LKKLL). The residue at position 146 (K146) is an N6-acetyllysine. The residue at position 178 (T178) is a Phosphothreonine; by AMPK. K184 is modified (N6-acetyllysine). Residues 213–277 (YLTTNDDPPH…NDPKGSPFEN (65 aa)) form a disordered region. Residues 219–237 (DPPHTKPTENRNSSRDKCT) are compositionally biased toward basic and acidic residues. N6-acetyllysine is present on residues K254, K271, K278, and K321. Residues 290-351 (GTAGLTPPTT…NNSTKKGPEQ (62 aa)) are disordered. The segment at 293–339 (GLTPPTTPPHKANQDNPFRASPKLKSSCKTVVPPPSKKPRYSESSGT) is interaction with PPARG. Residues 334–346 (SESSGTQGNNSTK) are compositionally biased toward polar residues. N6-acetyllysine occurs at positions 347, 413, 442, and 451. Residues 350 to 798 (EQSELYAQLS…LKEAQRSLRR (449 aa)) form a mediates interaction with RNF34 region. Position 539 is a phosphoserine; by AMPK (S539). 3 disordered regions span residues 542–599 (SFNS…SSRS), 613–639 (HRNS…SYEE), and 650–669 (YRRE…ERQR). Residues 563 to 578 (QRMRSRSRSFSRHRSC) are compositionally biased toward basic residues. The span at 579-599 (SRSPYSRSRSRSPGSRSSSRS) shows a compositional bias: low complexity. Over residues 622–631 (SRSRSPYSRR) the composition is skewed to basic residues. One can recognise an RRM domain in the interval 677 to 753 (RVIYVGKIRP…TDFELYFCGR (77 aa)). K758 and K779 each carry N6-acetyllysine.

Homooligomer. Interacts with MYBBP1A; inhibits MYBBP1A transcriptional activation. Interacts with PRDM16, LPIN1 and PML. Interacts (via LXXLL motif) with RORA and RORC (via AF-2 motif); activates RORA and RORC transcriptional activation. Interacts with LRPPRC. Interacts with FOXO1. Interacts with NR5A2. Post-translationally, phosphorylation by AMPK in skeletal muscle increases activation of its own promoter. Phosphorylated by CLK2. In terms of processing, heavily acetylated by KAT2A/GCN5 under conditions of high nutrients, leading to inactivation of PPARGC1A. Deacetylated by SIRT1 in low nutrients/high NAD conditions, leading to its activation. Ubiquitinated. Ubiquitination by RNF34 induces proteasomal degradation. Heart, skeletal muscle, liver and kidney. Expressed at lower levels in brain and pancreas and at very low levels in the intestine and white adipose tissue. In skeletal muscle, levels were lower in obese than in lean subjects and fasting induced a 2-fold increase in levels in the skeletal muscle in obese subjects.

The protein localises to the nucleus. It localises to the PML body. It is found in the cytoplasm. Its function is as follows. Transcriptional coactivator for steroid receptors and nuclear receptors. Greatly increases the transcriptional activity of PPARG and thyroid hormone receptor on the uncoupling protein promoter. Can regulate key mitochondrial genes that contribute to the program of adaptive thermogenesis. Plays an essential role in metabolic reprogramming in response to dietary availability through coordination of the expression of a wide array of genes involved in glucose and fatty acid metabolism. Acts as a key regulator of gluconeogenesis: stimulates hepatic gluconeogenesis by increasing the expression of gluconeogenic enzymes, and acting together with FOXO1 to promote the fasting gluconeogenic program. Induces the expression of PERM1 in the skeletal muscle in an ESRRA-dependent manner. Also involved in the integration of the circadian rhythms and energy metabolism. Required for oscillatory expression of clock genes, such as BMAL1 and NR1D1, through the coactivation of RORA and RORC, and metabolic genes, such as PDK4 and PEPCK. The polypeptide is Peroxisome proliferator-activated receptor gamma coactivator 1-alpha (PPARGC1A) (Homo sapiens (Human)).